Reading from the N-terminus, the 350-residue chain is MRIPNIFLSYLRQVAVDGTLSSCSGVKSRKPVIAFGFDDSQDSLVDENDEKILEPFGYYRHLLKGKSARTVLMHCFNAFLGLPEDWVLGVTKAIEDLHNASLLIDDIEDESALRRGSPAAHMKYGIALTMNAGNLVYFTVLQDIYDLGMRTGGTQVANAMAHIYTEEMIELHRGQGIEIWWRDQRSPPSVDQYIHMLEQKTGGLLRLGVRLLQCHPGGNNRADLSAIALRIGVYYQLRDDYINLMSTSYHDERGFAEDITEGKYTFPMLHSLKRSPDSGLREILDLKPADIALKKKAIAIMQETGSLIATRNLLGAVKNDLSGLVAEQRGDDYAMSAGLERFLEKLYIAE.

Lys66, Arg69, and His98 together coordinate isopentenyl diphosphate. Positions 105 and 109 each coordinate Mg(2+). A dimethylallyl diphosphate-binding site is contributed by Arg114. Arg115 contacts isopentenyl diphosphate. 5 residues coordinate dimethylallyl diphosphate: Lys200, Thr201, Gln236, Asn243, and Lys263.

It belongs to the FPP/GGPP synthase family. Mg(2+) is required as a cofactor.

The catalysed reaction is isopentenyl diphosphate + dimethylallyl diphosphate = (2E)-geranyl diphosphate + diphosphate. The enzyme catalyses isopentenyl diphosphate + (2E)-geranyl diphosphate = (2E,6E)-farnesyl diphosphate + diphosphate. It catalyses the reaction isopentenyl diphosphate + (2E,6E)-farnesyl diphosphate = (2E,6E,10E)-geranylgeranyl diphosphate + diphosphate. Its pathway is secondary metabolite biosynthesis; terpenoid biosynthesis. Its function is as follows. Geranylgeranyl pyrophosphate synthase; part of the gene cluster that mediates the biosynthesis of pleuromutilin, a tricyclic diterpene showing antibacterial properties. The geranylgeranyl diphosphate (GGPP) synthase ple4 catalyzes the first step in pleuromutilin biosynthesis. GGPP is then substrate of the premutilin synthase (PS) ple3 to yield premutilin. Premutilin synthase is a bifunctional enzyme composed of the fusion of a class II diterpene cyclase (DTC) and a class I diterpene synthase (DTS), with the corresponding domains and active sites containing characteristic aspartate-rich motifs. GGPP is first converted to mutildienyl-diphosphate (MPP) at the class II DTC site. MPP is subsequently further cyclized at the class I DTS site, followed by a 1,5-hydride shift and addition of water prior to terminating deprotonation, to yield premutilin. The cytochrome P450 monooxygenases ple5 and ple6 hydroxylate premutilin at C-11 and C-3, respectively, producing 11-hydroxypremutilin and 3-hydroxypremutilin. The combination of the actions of both ple5 and ple6 leads to the production of 3,11-dihydroxypremutilin. The short chain dehydrogenase ple7 further converts 3,11-dihydroxypremutilin into mutilin. The acetyltransferase ple2 then acetylates mutilin to produce 14-O-acetylmutilin. Finally, the cytochrome P450 monooxygenase ple1 catalyzes hydroxylation on the alpha position of the acetyl side chain of 14-O-acetylmutilin to yield pleuromutilin. In Rhodocybe pseudopiperita (Clitopilus pseudopiperitus), this protein is Geranylgeranyl pyrophosphate synthase.